A 399-amino-acid polypeptide reads, in one-letter code: Arylacetamide deacetylase (399 aa).

Residues 1–4 (MRKK) are Cytoplasmic-facing. A helical; Signal-anchor for type II membrane protein transmembrane segment spans residues 5–25 (YFGFLILGVLLAGYIYVPLPD). The Lumenal portion of the chain corresponds to 26–399 (NVEEPWKIML…QYINWLHENL (374 aa)). The Involved in the stabilization of the negatively charged intermediate by the formation of the oxyanion hole signature appears at 111-113 (HGG). Residues Cys-116 and Cys-340 are joined by a disulfide bond. Ser-189 is an active-site residue. The N-linked (GlcNAc...) asparagine glycan is linked to Asn-282. Residues Asp-343 and His-373 contribute to the active site.

The protein belongs to the 'GDXG' lipolytic enzyme family.

It localises to the endoplasmic reticulum membrane. Its subcellular location is the microsome membrane. The enzyme catalyses a triacylglycerol + H2O = a diacylglycerol + a fatty acid + H(+). In terms of biological role, displays cellular triglyceride lipase activity in liver, increases the levels of intracellular fatty acids derived from the hydrolysis of newly formed triglyceride stores and plays a role in very low-density lipoprotein assembly. Displays serine esterase activity in liver. Deacetylates a variety of arylacetamide substrates, including xenobiotic compounds and procarcinogens, converting them to the primary arylamide compounds and increasing their toxicity. This Bos taurus (Bovine) protein is Arylacetamide deacetylase (AADAC).